A 523-amino-acid chain; its full sequence is Synaptotagmin-10 (523 aa).

The Vesicular segment spans residues 1–55; it reads MSFRKEDGVSSLCQKALHIITELCFAGQVEWDKCSGIFPADRSGQGGGGTDISVS. The interval 13–35 is cysteine motif; that stretch reads CQKALHIITELCFAGQVEWDKCS. A helical membrane pass occupies residues 56–76; sequence LLAVVVSFCGLALLVVSLFVF. At 77–523 the chain is on the cytoplasmic side; the sequence is WKLCWPCWKS…CSSPRPPSTP (447 aa). A Phosphothreonine modification is found at Thr-136. C2 domains lie at 231–352 and 363–496; these read TCGK…TVWK and DLGE…THWH. 11 residues coordinate Ca(2+): Asp-262, Asp-268, Asp-320, Phe-321, Asp-322, Ser-325, Asp-328, Asp-394, Asp-400, Asp-454, and Asp-456.

This sequence belongs to the synaptotagmin family. In terms of assembly, homodimer; disulfide-linked via the cysteine motif. Can also form heterodimers with SYT3, SYT6, SYT7 and SYT9. The cofactor is Ca(2+).

The protein localises to the cytoplasmic vesicle. The protein resides in the secretory vesicle membrane. Its function is as follows. Ca(2+) sensor specifically required for the Ca(2+)-dependent exocytosis of secretory vesicles containing IGF1 in neurons of the olfactory bulb. Exocytosis of IGF1 is required for sensory perception of smell. Not involved in Ca(2+)-dependent synaptic vesicle exocytosis. Acts through Ca(2+) and phospholipid binding to the C2 domain: Ca(2+) induces binding of the C2-domains to phospholipid membranes and to assembled SNARE-complexes; both actions contribute to triggering exocytosis. The polypeptide is Synaptotagmin-10 (Syt10) (Rattus norvegicus (Rat)).